The following is a 198-amino-acid chain: uncharacterized protein (198 aa).

An N-terminal signal peptide occupies residues 1-28; that stretch reads MHPTQRKLMKRIILFLSLLFCIACPAIA.

This sequence belongs to the fimbrial protein family.

The protein resides in the fimbrium. Its function is as follows. Part of the yadCKLM-htrE-yadVN fimbrial operon. Could contribute to adhesion to various surfaces in specific environmental niches. This is an uncharacterized protein from Escherichia coli (strain K12).